We begin with the raw amino-acid sequence, 82 residues long: Host translation inhibitor 5b (82 aa).

Its function is as follows. Involved in host translation shutoff without degradating host RNA. By suppressing host gene expression, facilitates the evasion from host type I interferon immune response. The sequence is that of Host translation inhibitor 5b from Gallus gallus (Chicken).